Consider the following 170-residue polypeptide: Ubiquitin-conjugating enzyme E2 2 (170 aa).

The UBC core domain maps to 4–150 (PARRRLMRDF…VKETVEKSWE (147 aa)). Residue C88 is the Glycyl thioester intermediate of the active site. Residues 148–170 (SWEDDLKDMDDGDDDDDDDDDDD) are disordered. A compositionally biased stretch (acidic residues) spans 152–170 (DLKDMDDGDDDDDDDDDDD).

Belongs to the ubiquitin-conjugating enzyme family.

Its subcellular location is the cytoplasm. The protein localises to the nucleus. It catalyses the reaction S-ubiquitinyl-[E1 ubiquitin-activating enzyme]-L-cysteine + [E2 ubiquitin-conjugating enzyme]-L-cysteine = [E1 ubiquitin-activating enzyme]-L-cysteine + S-ubiquitinyl-[E2 ubiquitin-conjugating enzyme]-L-cysteine.. It participates in protein modification; protein ubiquitination. Catalyzes the covalent attachment of ubiquitin to other proteins. Plays a role in transcription regulation by catalyzing the monoubiquitination of histone H2B to form H2BK123ub1. H2BK123ub1 gives a specific tag for epigenetic transcriptional activation and is also a prerequisite for H3K4me and H3K79me formation. Also involved in postreplication repair of UV-damaged DNA, in N-end rule-dependent protein degradation and in sporulation. The chain is Ubiquitin-conjugating enzyme E2 2 (UBC2) from Eremothecium gossypii (strain ATCC 10895 / CBS 109.51 / FGSC 9923 / NRRL Y-1056) (Yeast).